Consider the following 556-residue polypeptide: 2-succinyl-5-enolpyruvyl-6-hydroxy-3-cyclohexene-1-carboxylate synthase (556 aa).

Belongs to the TPP enzyme family. MenD subfamily. In terms of assembly, homodimer. The cofactor is Mg(2+). It depends on Mn(2+) as a cofactor. Thiamine diphosphate is required as a cofactor.

It catalyses the reaction isochorismate + 2-oxoglutarate + H(+) = 5-enolpyruvoyl-6-hydroxy-2-succinyl-cyclohex-3-ene-1-carboxylate + CO2. Its pathway is quinol/quinone metabolism; 1,4-dihydroxy-2-naphthoate biosynthesis; 1,4-dihydroxy-2-naphthoate from chorismate: step 2/7. It participates in quinol/quinone metabolism; menaquinone biosynthesis. Catalyzes the thiamine diphosphate-dependent decarboxylation of 2-oxoglutarate and the subsequent addition of the resulting succinic semialdehyde-thiamine pyrophosphate anion to isochorismate to yield 2-succinyl-5-enolpyruvyl-6-hydroxy-3-cyclohexene-1-carboxylate (SEPHCHC). The sequence is that of 2-succinyl-5-enolpyruvyl-6-hydroxy-3-cyclohexene-1-carboxylate synthase from Escherichia coli (strain UTI89 / UPEC).